A 141-amino-acid polypeptide reads, in one-letter code: Mitochondrial import inner membrane translocase subunit Tim16 (141 aa).

Disordered stretches follow at residues 34-53 and 108-141; these read AARR…SNLR and LDHE…RQRR. The J-like stretch occupies residues 60-113; sequence EAKQILNIDDPKNVDAITKNYEHLFQVNERSKGGSFYIQSKVFRAKERLDHEIK. Residues 108–118 show a composition bias toward basic and acidic residues; it reads LDHEIKAHEQP.

Belongs to the TIM16/PAM16 family. In terms of assembly, probable component of the PAM complex at least composed of a mitochondrial HSP70 protein, Roe1, TIM44, blp/TIM16 and TIM14. Associates with the TIM23 complex. Expressed in distinct cells in the embryonic and larval nervous system.

Its subcellular location is the mitochondrion inner membrane. In terms of biological role, regulates ATP-dependent protein translocation into the mitochondrial matrix. Essential for larval development. In Drosophila melanogaster (Fruit fly), this protein is Mitochondrial import inner membrane translocase subunit Tim16 (blp).